We begin with the raw amino-acid sequence, 795 residues long: Glutamine--tRNA ligase, cytoplasmic (795 aa).

The segment at 188 to 220 (ADNEKPTKKKEKKEKPAKVEEKKAVVETTAEPS) is disordered. A compositionally biased stretch (basic and acidic residues) spans 200 to 212 (KEKPAKVEEKKAV). Positions 277-287 (PEPNGYLHIGH) match the 'HIGH' region motif. ATP-binding positions include 278–280 (EPN) and 284–290 (HIGHAKA). Positions 310 and 450 each coordinate L-glutamine. ATP contacts are provided by residues Thr-469, 498–499 (RL), and 506–508 (MSK). The 'KMSKS' region signature appears at 505 to 509 (VMSKR).

This sequence belongs to the class-I aminoacyl-tRNA synthetase family.

It localises to the cytoplasm. The protein resides in the cytosol. The enzyme catalyses tRNA(Gln) + L-glutamine + ATP = L-glutaminyl-tRNA(Gln) + AMP + diphosphate. This is Glutamine--tRNA ligase, cytoplasmic from Arabidopsis thaliana (Mouse-ear cress).